A 528-amino-acid chain; its full sequence is Nucleolar GTP-binding protein 1 (528 aa).

Residues 168-335 form the OBG-type G domain; it reads RTLLVCGFPN…VKAMACDLLL (168 aa). GTP is bound by residues 174 to 181, 220 to 224, and 287 to 290; these read GFPNVGKS, DTPGI, and SKSD. Positions 470–528 are disordered; it reads PDSWKHRSRNSGGDIAVHVRRDSKTQVAQPPRLPSKKKARFDDKHYYDRKPKHLYRGRK. Positions 509–518 are enriched in basic and acidic residues; the sequence is RFDDKHYYDR. Positions 519-528 are enriched in basic residues; the sequence is KPKHLYRGRK.

The protein belongs to the TRAFAC class OBG-HflX-like GTPase superfamily. OBG GTPase family. NOG subfamily.

The protein localises to the nucleus. It is found in the nucleolus. Its function is as follows. Involved in the biogenesis of the 60S ribosomal subunit. This chain is Nucleolar GTP-binding protein 1 (NOG1), found in Encephalitozoon cuniculi (strain GB-M1) (Microsporidian parasite).